We begin with the raw amino-acid sequence, 65 residues long: Photosystem II reaction center protein J (65 aa).

A compositionally biased stretch (basic and acidic residues) spans 1–17 (MSTKLKGPDGRIPDRLP). The segment at 1–20 (MSTKLKGPDGRIPDRLPDGT) is disordered. The chain crosses the membrane as a helical span at residues 36–56 (LWLVATVGGMAVLSVLGLFFF).

It belongs to the PsbJ family. In terms of assembly, PSII is composed of 1 copy each of membrane proteins PsbA, PsbB, PsbC, PsbD, PsbE, PsbF, PsbH, PsbI, PsbJ, PsbK, PsbL, PsbM, PsbT, PsbX, PsbY, Psb30/Ycf12, peripheral proteins PsbO, CyanoQ (PsbQ), PsbU, PsbV and a large number of cofactors. It forms dimeric complexes.

Its subcellular location is the cellular thylakoid membrane. Its function is as follows. One of the components of the core complex of photosystem II (PSII). PSII is a light-driven water:plastoquinone oxidoreductase that uses light energy to abstract electrons from H(2)O, generating O(2) and a proton gradient subsequently used for ATP formation. It consists of a core antenna complex that captures photons, and an electron transfer chain that converts photonic excitation into a charge separation. The polypeptide is Photosystem II reaction center protein J (Prochlorococcus marinus (strain MIT 9303)).